We begin with the raw amino-acid sequence, 463 residues long: Chromogranin-A (463 aa).

The signal sequence occupies residues 1 to 18 (MRSTAVLALLLCAGQVFA). An intrachain disulfide couples cysteine 35 to cysteine 56. The segment at 88 to 440 (KERAQQPLKQ…ANRRAEDQEL (353 aa)) is disordered. The span at 92–116 (QQPLKQQQPPKQQQQQQQQQQQEQQ) shows a compositional bias: low complexity. Position 119 is a phosphoserine (serine 119). Residues 134 to 160 (DAKHRDAAAEVPSRDTMEKRKDSDKGQ) show a composition bias toward basic and acidic residues. Residues 196–208 (TATNTQSPTSLPS) show a composition bias toward polar residues. Phosphoserine occurs at positions 220, 282, and 308. The span at 301 to 310 (GKGELEHSQQ) shows a compositional bias: basic and acidic residues. Glycine amide is present on glycine 329. Basic and acidic residues-rich tracts occupy residues 331 to 340 (KGRELEHKQE) and 348 to 375 (RLSR…KRLE). A phosphoserine mark is found at serine 350 and serine 383. Methionine 384 is subject to Methionine sulfoxide. Over residues 409-437 (SSREDSVEARSDFEEKKEEEGSANRRAED) the composition is skewed to basic and acidic residues. Phosphoserine occurs at positions 410, 414, and 430. Serine 430 carries an O-linked (Xyl...) (chondroitin sulfate) serine glycan. At glutamine 438 the chain carries Pyrrolidone carboxylic acid. Serine 444 is subject to Phosphoserine.

This sequence belongs to the chromogranin/secretogranin protein family. Self-interacts; self-assembly is promoted in vitro by chondroitin sulfate attachment which occurs at mildly acidic pH conditions. Interacts with SCG3; this interaction is optimal in conditions mimicking the lumenal milieu of the trans-Golgi network, i.e. pH 5.5 and 10 mM Ca(+2). Interacts with ITPR1 in the secretory granules. O-glycosylated; contains chondroitin sulfate (CS). CS attachment is pH-dependent, being observed at mildly acidic conditions of pH 5 but not at neutral pH, and promotes self-assembly in vitro.

The protein localises to the cytoplasmic vesicle. It is found in the secretory vesicle. Its subcellular location is the neuronal dense core vesicle. It localises to the secreted. In terms of biological role, strongly inhibits glucose induced insulin release from the pancreas. Inhibits catecholamine release from chromaffin cells and noradrenergic neurons by acting as a non-competitive nicotinic cholinergic antagonist. Can induce mast cell migration, degranulation and production of cytokines and chemokines. Its function is as follows. Regulates granule biogenesis in endocrine cells by up-regulating the transcription of protease nexin 1 (SERPINE2) via a cAMP-PKA-SP1 pathway. This leads to inhibition of granule protein degradation in the Golgi complex which in turn promotes granule formation. Pyroglutaminated (pGlu)-serpinin exerts an antiapoptotic effect on cells exposed to oxidative stress. The polypeptide is Chromogranin-A (Chga) (Mus musculus (Mouse)).